Consider the following 634-residue polypeptide: CREB-regulated transcription coactivator 1 (634 aa).

Residues Ser64 and Ser113 each carry the phosphoserine modification. Disordered regions lie at residues 110-174 (RLGS…GSQD), 191-221 (TTSE…VPGI), 258-331 (LPTP…TLSP), and 357-479 (QAGS…HTST). Thr149 carries the phosphothreonine modification. Ser151 bears the Phosphoserine; by SIK1 and SIK2 mark. The segment covering 151–174 (SDSALHQSTMTPTQPESFSSGSQD) has biased composition (polar residues). Thr161 carries the post-translational modification Phosphothreonine. Basic and acidic residues predominate over residues 194–208 (EADKNLSKQAWDTKK). A Nuclear export signal motif is present at residues 242-258 (TGGSLPDLTNIHFPSPL). Polar residues-rich tracts occupy residues 271 to 283 (ALSS…NLAA), 296 to 305 (GMSTPGSSPQ), and 314 to 331 (LSLS…TLSP). Residues 362–397 (QPPPQPQPPPPPPPASQQPPPPPPPQAPVRLPPGGP) are compositionally biased toward pro residues. Over residues 446–479 (QYRTSAGSPANQSPTSPVSNQGFSPGSSPQHTST) the composition is skewed to polar residues.

Belongs to the TORC family. In terms of assembly, binds, as a tetramer, through its N-terminal region, with the bZIP domain of CREB1. 'Arg-314' in the bZIP domain of CREB1 is essential for this interaction. Interaction, via its C-terminal, with TAF4, enhances recruitment of TAF4 to CREB1. Interacts with 14-3-3 proteins, including YWHAE/14-3-3 epsilon. Interacts with calmodulin-dependent catalytic subunit PPP3CA/calcineurin A. (Microbial infection) Interacts with HTLV1 Tax. Phosphorylation/dephosphorylation states of Ser-151 are required for regulating transduction of CREB activity. TORCs are inactive when phosphorylated, and active when dephosphorylated at this site. This primary site of phosphorylation is mediated by SIKs (SIK1 and SIK2), is regulated by cAMP and calcium levels and is dependent on the phosphorylation of SIKs by LKB1. In terms of tissue distribution, highly expressed in adult and fetal brain. Located to specific regions such as the prefrontal cortex and cerebellum. Very low expression in other tissues such as heart, spleen, lung, skeletal muscle, salivary gland, ovary and kidney.

The protein resides in the cytoplasm. Its subcellular location is the nucleus. Transcriptional coactivator for CREB1 which activates transcription through both consensus and variant cAMP response element (CRE) sites. Acts as a coactivator, in the SIK/TORC signaling pathway, being active when dephosphorylated and acts independently of CREB1 'Ser-133' phosphorylation. Enhances the interaction of CREB1 with TAF4. Regulates the expression of specific CREB-activated genes such as the steroidogenic gene, StAR. Potent coactivator of PGC1alpha and inducer of mitochondrial biogenesis in muscle cells. In the hippocampus, involved in late-phase long-term potentiation (L-LTP) maintenance at the Schaffer collateral-CA1 synapses. May be required for dendritic growth of developing cortical neurons. In concert with SIK1, regulates the light-induced entrainment of the circadian clock. In response to light stimulus, coactivates the CREB-mediated transcription of PER1 which plays an important role in the photic entrainment of the circadian clock. In terms of biological role, (Microbial infection) Plays a role of coactivator for TAX activation of the human T-cell leukemia virus type 1 (HTLV-1) long terminal repeats (LTR). The polypeptide is CREB-regulated transcription coactivator 1 (Homo sapiens (Human)).